Reading from the N-terminus, the 450-residue chain is Ribulose bisphosphate carboxylase large chain (450 aa).

Lys-4 is subject to N6,N6,N6-trimethyllysine. Asn-113 and Thr-163 together coordinate substrate. Catalysis depends on Lys-165, which acts as the Proton acceptor. Lys-167 contacts substrate. Residues Lys-191, Asp-193, and Glu-194 each coordinate Mg(2+). An N6-carboxylysine modification is found at Lys-191. The active-site Proton acceptor is the His-284. Positions 285, 317, and 369 each coordinate substrate.

This sequence belongs to the RuBisCO large chain family. Type I subfamily. As to quaternary structure, heterohexadecamer of 8 large chains and 8 small chains; disulfide-linked. The disulfide link is formed within the large subunit homodimers. The cofactor is Mg(2+). In terms of processing, the disulfide bond which can form in the large chain dimeric partners within the hexadecamer appears to be associated with oxidative stress and protein turnover.

It is found in the plastid. Its subcellular location is the chloroplast. The enzyme catalyses 2 (2R)-3-phosphoglycerate + 2 H(+) = D-ribulose 1,5-bisphosphate + CO2 + H2O. It carries out the reaction D-ribulose 1,5-bisphosphate + O2 = 2-phosphoglycolate + (2R)-3-phosphoglycerate + 2 H(+). Functionally, ruBisCO catalyzes two reactions: the carboxylation of D-ribulose 1,5-bisphosphate, the primary event in carbon dioxide fixation, as well as the oxidative fragmentation of the pentose substrate in the photorespiration process. Both reactions occur simultaneously and in competition at the same active site. This is Ribulose bisphosphate carboxylase large chain from Sedum rubrotinctum (Jelly bean plant).